Consider the following 207-residue polypeptide: Small ribosomal subunit protein uS4 (207 aa).

Positions 31 to 51 are disordered; sequence KCKLDSKPGQHGRTSGARTSD. The S4 RNA-binding domain occupies 97–160; the sequence is SRLDNVVYRM…KKQARIRESL (64 aa).

This sequence belongs to the universal ribosomal protein uS4 family. In terms of assembly, part of the 30S ribosomal subunit. Contacts protein S5. The interaction surface between S4 and S5 is involved in control of translational fidelity.

Its function is as follows. One of the primary rRNA binding proteins, it binds directly to 16S rRNA where it nucleates assembly of the body of the 30S subunit. Functionally, with S5 and S12 plays an important role in translational accuracy. This is Small ribosomal subunit protein uS4 from Bordetella avium (strain 197N).